The chain runs to 231 residues: ATP phosphoribosyltransferase (231 aa).

This sequence belongs to the ATP phosphoribosyltransferase family. Short subfamily. In terms of assembly, heteromultimer composed of HisG and HisZ subunits.

It localises to the cytoplasm. The catalysed reaction is 1-(5-phospho-beta-D-ribosyl)-ATP + diphosphate = 5-phospho-alpha-D-ribose 1-diphosphate + ATP. The protein operates within amino-acid biosynthesis; L-histidine biosynthesis; L-histidine from 5-phospho-alpha-D-ribose 1-diphosphate: step 1/9. Catalyzes the condensation of ATP and 5-phosphoribose 1-diphosphate to form N'-(5'-phosphoribosyl)-ATP (PR-ATP). Has a crucial role in the pathway because the rate of histidine biosynthesis seems to be controlled primarily by regulation of HisG enzymatic activity. The protein is ATP phosphoribosyltransferase (hisG) of Rhizobium etli (strain ATCC 51251 / DSM 11541 / JCM 21823 / NBRC 15573 / CFN 42).